Reading from the N-terminus, the 122-residue chain is Small ribosomal subunit protein uS13 (122 aa).

Positions 95-122 are disordered; that stretch reads GLPVRGQRTKTNARTRKGPKKTIAGKKK.

Belongs to the universal ribosomal protein uS13 family. As to quaternary structure, part of the 30S ribosomal subunit. Forms a loose heterodimer with protein S19. Forms two bridges to the 50S subunit in the 70S ribosome.

Located at the top of the head of the 30S subunit, it contacts several helices of the 16S rRNA. In the 70S ribosome it contacts the 23S rRNA (bridge B1a) and protein L5 of the 50S subunit (bridge B1b), connecting the 2 subunits; these bridges are implicated in subunit movement. Contacts the tRNAs in the A and P-sites. The polypeptide is Small ribosomal subunit protein uS13 (Corynebacterium glutamicum (strain ATCC 13032 / DSM 20300 / JCM 1318 / BCRC 11384 / CCUG 27702 / LMG 3730 / NBRC 12168 / NCIMB 10025 / NRRL B-2784 / 534)).